A 220-amino-acid chain; its full sequence is Flavin-dependent thymidylate synthase (220 aa).

In terms of domain architecture, ThyX spans 1–208; the sequence is MKIDILDKGF…PWTFEAFLKY (208 aa). FAD contacts are provided by residues threonine 55, 78–80, and glutamate 86; that span reads RHR. DUMP-binding positions include 75–78, 86–90, and arginine 147; these read QWFR and ELSGR. Positions 78 to 88 match the ThyX motif motif; the sequence is RHRIASYNELS. Residues 163-165 and asparagine 169 each bind FAD; that span reads NAR. Arginine 174 provides a ligand contact to dUMP. The active-site Involved in ionization of N3 of dUMP, leading to its activation is arginine 174.

It belongs to the thymidylate synthase ThyX family. Homotetramer. FAD is required as a cofactor.

It carries out the reaction dUMP + (6R)-5,10-methylene-5,6,7,8-tetrahydrofolate + NADPH + H(+) = dTMP + (6S)-5,6,7,8-tetrahydrofolate + NADP(+). It participates in pyrimidine metabolism; dTTP biosynthesis. In terms of biological role, catalyzes the reductive methylation of 2'-deoxyuridine-5'-monophosphate (dUMP) to 2'-deoxythymidine-5'-monophosphate (dTMP) while utilizing 5,10-methylenetetrahydrofolate (mTHF) as the methyl donor, and NADPH and FADH(2) as the reductant. This Thermotoga petrophila (strain ATCC BAA-488 / DSM 13995 / JCM 10881 / RKU-1) protein is Flavin-dependent thymidylate synthase.